A 537-amino-acid chain; its full sequence is Glutamyl-tRNA(Gln) amidotransferase subunit B, chloroplastic/mitochondrial (537 aa).

The protein belongs to the GatB/GatE family. GatB subfamily. Subunit of the heterotrimeric GatCAB amidotransferase (AdT) complex, composed of A, B and C subunits.

It localises to the mitochondrion. Its subcellular location is the plastid. The protein resides in the chloroplast. It catalyses the reaction L-glutamyl-tRNA(Gln) + L-glutamine + ATP + H2O = L-glutaminyl-tRNA(Gln) + L-glutamate + ADP + phosphate + H(+). Its function is as follows. Allows the formation of correctly charged Gln-tRNA(Gln) through the transamidation of misacylated Glu-tRNA(Gln) in chloroplasts and mitochondria. The reaction takes place in the presence of glutamine and ATP through an activated gamma-phospho-Glu-tRNA(Gln). The sequence is that of Glutamyl-tRNA(Gln) amidotransferase subunit B, chloroplastic/mitochondrial from Ostreococcus tauri.